A 780-amino-acid polypeptide reads, in one-letter code: ATP-dependent 6-phosphofructokinase, liver type (780 aa).

Position 2 is an N-acetylalanine (alanine 2). The N-terminal catalytic PFK domain 1 stretch occupies residues 2-390 (AAVDLEKLRA…NWNIYKLLAH (389 aa)). ATP is bound by residues glycine 25, 88-89 (RC), and 118-121 (GDGS). Aspartate 119 is a Mg(2+) binding site. Substrate contacts are provided by residues 164-166 (SID), arginine 201, 208-210 (MGR), glutamate 264, arginine 292, and 298-301 (HVQR). Residue aspartate 166 is the Proton acceptor of the active site. Serine 377 carries the post-translational modification Phosphoserine. The segment at 391 to 400 (QKPPKEKSNF) is interdomain linker. The tract at residues 401-780 (SLAILNVGAP…RRTLSMDKGF (380 aa)) is C-terminal regulatory PFK domain 2. Beta-D-fructose 2,6-bisphosphate-binding positions include arginine 470, 527–531 (TISNN), arginine 565, 572–574 (MGG), and glutamate 628. A glycan (O-linked (GlcNAc) serine) is linked at serine 529. At tyrosine 640 the chain carries Phosphotyrosine. Beta-D-fructose 2,6-bisphosphate-binding positions include arginine 654, 660 to 663 (HLQQ), and arginine 734. Serine 775 is subject to Phosphoserine.

It belongs to the phosphofructokinase type A (PFKA) family. ATP-dependent PFK group I subfamily. Eukaryotic two domain clade 'E' sub-subfamily. Homo- and heterotetramers. Phosphofructokinase (PFK) enzyme functions as a tetramer composed of different combinations of 3 types of subunits, called PFKM (where M stands for Muscle), PFKL (Liver) and PFKP (Platelet). The composition of the PFK tetramer differs according to the tissue type it is present in. In muscles, it is composed of 4 PFKM subunits (also called M4). In the liver, the predominant form is a tetramer of PFKL subunits (L4). In erythrocytes, both PFKM and PFKL subunits randomly tetramerize to form M4, L4 and other combinations (ML3, M2L2, M3L). The kinetic and regulatory properties of the tetrameric enzyme are dependent on the subunit composition, hence can vary across tissues. Requires Mg(2+) as cofactor. In terms of processing, glcNAcylation at Ser-529 by OGT decreases enzyme activity, leading to redirect glucose flux through the oxidative pentose phosphate pathway. Glycosylation is stimulated by both hypoxia and glucose deprivation.

It localises to the cytoplasm. The catalysed reaction is beta-D-fructose 6-phosphate + ATP = beta-D-fructose 1,6-bisphosphate + ADP + H(+). It functions in the pathway carbohydrate degradation; glycolysis; D-glyceraldehyde 3-phosphate and glycerone phosphate from D-glucose: step 3/4. Its activity is regulated as follows. Allosterically activated by ADP, AMP, or fructose 2,6-bisphosphate, and allosterically inhibited by ATP or citrate. GlcNAcylation by OGT overcomes allosteric regulation. In terms of biological role, catalyzes the phosphorylation of D-fructose 6-phosphate to fructose 1,6-bisphosphate by ATP, the first committing step of glycolysis. Negatively regulates the phagocyte oxidative burst in response to bacterial infection by controlling cellular NADPH biosynthesis and NADPH oxidase-derived reactive oxygen species. Upon macrophage activation, drives the metabolic switch toward glycolysis, thus preventing glucose turnover that produces NADPH via pentose phosphate pathway. This chain is ATP-dependent 6-phosphofructokinase, liver type, found in Homo sapiens (Human).